A 1501-amino-acid polypeptide reads, in one-letter code: Multidrug resistance protein CDR1 (1501 aa).

The disordered stretch occupies residues 1–30; the sequence is MSDSKMSSQDESKLEKAISQDSSSENHSIN. The Cytoplasmic portion of the chain corresponds to 1-513; it reads MSDSKMSSQD…NFLRMKGDPS (513 aa). Basic and acidic residues predominate over residues 8–18; it reads SQDESKLEKAI. Positions 150–404 constitute an ABC transporter 1 domain; the sequence is LATEGFRHFQ…FEKMGWKCPQ (255 aa). Residues 514-534 traverse the membrane as a helical segment; sequence IPIFSVFGQLVMGLILSSVFY. N-linked (GlcNAc...) asparagine glycosylation occurs at Asn535. Helical transmembrane passes span 549–569, 598–618, 623–643, and 655–675; these read AMFFAVLFNAFSSLLEIMSLF, LPVKLAMSMSFNFVFYFMVNF, GRFFFYWLMCIWCTFVMSHLF, and GAMTPATVLLLAMVIYTGFVI. Residue Asn724 is glycosylated (N-linked (GlcNAc...) asparagine). A helical transmembrane segment spans residues 765–785; it reads LGITIGFAVFFLAIYIALTEF. Residues 786–1195 are Cytoplasmic-facing; it reads NKGAMQKGEI…TIVQDWRSPG (410 aa). Positions 859–1103 constitute an ABC transporter 2 domain; the sequence is FFWRDLTYQV…MINYFEKYGA (245 aa). Residue 895-902 participates in ATP binding; that stretch reads GASGAGKT. A run of 6 helical transmembrane segments spans residues 1196–1216, 1230–1250, 1281–1301, 1315–1335, 1356–1376, and 1467–1487; these read YIYSKIFLVVSAALFNGFSFF, FSVFMFFIPFNTLVQQMLPYF, IPYQVAVGTIAFFCWYYPLGL, GVLMWMLVTAFYVYTATMGQL, MCLNFCGVLAGPDVLPGFWIF, and FGIFIAFIAINIILTVIFYWL.

Belongs to the ABC transporter superfamily. ABCG family. PDR (TC 3.A.1.205) subfamily.

The protein localises to the membrane. Its function is as follows. Transporter, whose physiological function is not yet established. Confers resistance to the chemical cycloheximide. The sequence is that of Multidrug resistance protein CDR1 (CDR1) from Candida albicans (Yeast).